The sequence spans 263 residues: uncharacterized protein (263 aa).

31–38 (GPTGSGKT) contributes to the ATP binding site.

Belongs to the CbbQ/NirQ/NorQ/GpvN family.

This is an uncharacterized protein from Staphylococcus aureus (strain bovine RF122 / ET3-1).